The chain runs to 132 residues: Dinoflagellate viral nucleoprotein 5 (132 aa).

Positions 1–44 (MAAMKKAMKVKKSAKKSAKKSGKKGGMKKKAKRVSKVARGKRAK) are enriched in basic residues. A disordered region spans residues 1 to 84 (MAAMKKAMKV…KKQSEHGKKI (84 aa)). A compositionally biased stretch (polar residues) spans 57–66 (GGLTKNSLVK).

In terms of processing, phosphorylated.

The protein localises to the nucleus. Its subcellular location is the chromosome. Its function is as follows. DNA-binding protein, which similarly to histones, may compact DNA into chromatin. This chain is Dinoflagellate viral nucleoprotein 5, found in Hematodinium sp.